Here is a 242-residue protein sequence, read N- to C-terminus: 1-(5-phosphoribosyl)-5-[(5-phosphoribosylamino)methylideneamino] imidazole-4-carboxamide isomerase (242 aa).

Aspartate 10 functions as the Proton acceptor in the catalytic mechanism. The active-site Proton donor is aspartate 132.

Belongs to the HisA/HisF family.

The protein resides in the cytoplasm. It catalyses the reaction 1-(5-phospho-beta-D-ribosyl)-5-[(5-phospho-beta-D-ribosylamino)methylideneamino]imidazole-4-carboxamide = 5-[(5-phospho-1-deoxy-D-ribulos-1-ylimino)methylamino]-1-(5-phospho-beta-D-ribosyl)imidazole-4-carboxamide. Its pathway is amino-acid biosynthesis; L-histidine biosynthesis; L-histidine from 5-phospho-alpha-D-ribose 1-diphosphate: step 4/9. This Streptococcus sanguinis (strain SK36) protein is 1-(5-phosphoribosyl)-5-[(5-phosphoribosylamino)methylideneamino] imidazole-4-carboxamide isomerase.